A 130-amino-acid polypeptide reads, in one-letter code: Small ribosomal subunit protein uS9 (130 aa).

Belongs to the universal ribosomal protein uS9 family.

This chain is Small ribosomal subunit protein uS9, found in Onion yellows phytoplasma (strain OY-M).